The primary structure comprises 80 residues: Sec-independent protein translocase protein TatA (80 aa).

The helical transmembrane segment at 1-21 threads the bilayer; that stretch reads MGQIGIWQILIIALVILVLFG. Residues 38 to 80 form a disordered region; it reads SFKKGLNEEDKPAEPAAKIEGPSHEAKPAGEAAKDPRPADKQG. Over residues 58-80 the composition is skewed to basic and acidic residues; sequence GPSHEAKPAGEAAKDPRPADKQG.

Belongs to the TatA/E family. The Tat system comprises two distinct complexes: a TatABC complex, containing multiple copies of TatA, TatB and TatC subunits, and a separate TatA complex, containing only TatA subunits. Substrates initially bind to the TatABC complex, which probably triggers association of the separate TatA complex to form the active translocon.

Its subcellular location is the cell inner membrane. Its function is as follows. Part of the twin-arginine translocation (Tat) system that transports large folded proteins containing a characteristic twin-arginine motif in their signal peptide across membranes. TatA could form the protein-conducting channel of the Tat system. The polypeptide is Sec-independent protein translocase protein TatA (Erythrobacter litoralis (strain HTCC2594)).